Here is a 168-residue protein sequence, read N- to C-terminus: 6,7-dimethyl-8-ribityllumazine synthase (168 aa).

Residues phenylalanine 24, alanine 58–glutamate 60, and alanine 82–isoleucine 84 each bind 5-amino-6-(D-ribitylamino)uracil. Glutamate 87–threonine 88 contacts (2S)-2-hydroxy-3-oxobutyl phosphate. Histidine 90 functions as the Proton donor in the catalytic mechanism. Asparagine 115 serves as a coordination point for 5-amino-6-(D-ribitylamino)uracil. Residue arginine 129 coordinates (2S)-2-hydroxy-3-oxobutyl phosphate.

Belongs to the DMRL synthase family.

The enzyme catalyses (2S)-2-hydroxy-3-oxobutyl phosphate + 5-amino-6-(D-ribitylamino)uracil = 6,7-dimethyl-8-(1-D-ribityl)lumazine + phosphate + 2 H2O + H(+). It participates in cofactor biosynthesis; riboflavin biosynthesis; riboflavin from 2-hydroxy-3-oxobutyl phosphate and 5-amino-6-(D-ribitylamino)uracil: step 1/2. Catalyzes the formation of 6,7-dimethyl-8-ribityllumazine by condensation of 5-amino-6-(D-ribitylamino)uracil with 3,4-dihydroxy-2-butanone 4-phosphate. This is the penultimate step in the biosynthesis of riboflavin. In Paraburkholderia xenovorans (strain LB400), this protein is 6,7-dimethyl-8-ribityllumazine synthase.